Here is a 129-residue protein sequence, read N- to C-terminus: Ribosome-binding factor A (129 aa).

The protein belongs to the RbfA family. Monomer. Binds 30S ribosomal subunits, but not 50S ribosomal subunits or 70S ribosomes.

It localises to the cytoplasm. Its function is as follows. One of several proteins that assist in the late maturation steps of the functional core of the 30S ribosomal subunit. Associates with free 30S ribosomal subunits (but not with 30S subunits that are part of 70S ribosomes or polysomes). Required for efficient processing of 16S rRNA. May interact with the 5'-terminal helix region of 16S rRNA. The chain is Ribosome-binding factor A from Stutzerimonas stutzeri (strain A1501) (Pseudomonas stutzeri).